A 487-amino-acid polypeptide reads, in one-letter code: Malonate-semialdehyde dehydrogenase (487 aa).

NAD(+)-binding residues include alanine 150, phenylalanine 152, lysine 176, glutamate 179, arginine 180, serine 229, and threonine 251. Cysteine 284 functions as the Nucleophile in the catalytic mechanism. Residue glutamate 382 coordinates NAD(+).

This sequence belongs to the aldehyde dehydrogenase family. IolA subfamily. Homotetramer.

The enzyme catalyses 3-oxopropanoate + NAD(+) + CoA + H2O = hydrogencarbonate + acetyl-CoA + NADH + H(+). The catalysed reaction is 2-methyl-3-oxopropanoate + NAD(+) + CoA + H2O = propanoyl-CoA + hydrogencarbonate + NADH + H(+). Its pathway is polyol metabolism; myo-inositol degradation into acetyl-CoA; acetyl-CoA from myo-inositol: step 7/7. In terms of biological role, catalyzes the oxidation of malonate semialdehyde (MSA) and methylmalonate semialdehyde (MMSA) into acetyl-CoA and propanoyl-CoA, respectively. Is involved in a myo-inositol catabolic pathway. Bicarbonate, and not CO2, is the end-product of the enzymatic reaction. The polypeptide is Malonate-semialdehyde dehydrogenase (Bacillus subtilis (strain 168)).